Reading from the N-terminus, the 183-residue chain is Intraflagellar transport protein 27 homolog (183 aa).

Residues 12-19 (GAPTVGKT), 63-67 (DVSGQ), and 120-123 (NKSD) contribute to the GTP site.

The protein belongs to the small GTPase superfamily. Rab family. Component of the IFT complex B.

The protein resides in the cell projection. It localises to the cilium. The protein localises to the flagellum. In terms of biological role, small GTPase-like component of the intraflagellar transport (IFT) complex B required for both anterograde and retrograde intraflagellar transport. May be involved in cargo loading of the retrograde transport. In Trypanosoma brucei brucei (strain 927/4 GUTat10.1), this protein is Intraflagellar transport protein 27 homolog.